The sequence spans 339 residues: Fructose-1,6-bisphosphatase class 1 (339 aa).

Residues E94, D116, L118, and D119 each coordinate Mg(2+). Residues 119–122 (DGSS), N210, and K276 each bind substrate. E282 is a Mg(2+) binding site.

Belongs to the FBPase class 1 family. As to quaternary structure, homotetramer. Mg(2+) serves as cofactor.

The protein localises to the cytoplasm. It catalyses the reaction beta-D-fructose 1,6-bisphosphate + H2O = beta-D-fructose 6-phosphate + phosphate. It participates in carbohydrate biosynthesis; gluconeogenesis. This chain is Fructose-1,6-bisphosphatase class 1, found in Burkholderia ambifaria (strain ATCC BAA-244 / DSM 16087 / CCUG 44356 / LMG 19182 / AMMD) (Burkholderia cepacia (strain AMMD)).